The chain runs to 447 residues: Phosphoglucosamine mutase (447 aa).

Catalysis depends on Ser105, which acts as the Phosphoserine intermediate. Mg(2+) contacts are provided by Ser105, Asp244, Asp246, and Asp248. A Phosphoserine modification is found at Ser105.

It belongs to the phosphohexose mutase family. It depends on Mg(2+) as a cofactor. In terms of processing, activated by phosphorylation.

The enzyme catalyses alpha-D-glucosamine 1-phosphate = D-glucosamine 6-phosphate. In terms of biological role, catalyzes the conversion of glucosamine-6-phosphate to glucosamine-1-phosphate. This Polynucleobacter asymbioticus (strain DSM 18221 / CIP 109841 / QLW-P1DMWA-1) (Polynucleobacter necessarius subsp. asymbioticus) protein is Phosphoglucosamine mutase.